A 104-amino-acid chain; its full sequence is UPF0213 protein in VLF1-GP41 intergenic region (104 aa).

The 81-residue stretch at 9 to 89 (KVWCVYILRQ…SKYFKLRLIK (81 aa)) folds into the GIY-YIG domain.

This sequence belongs to the UPF0213 family.

This is UPF0213 protein in VLF1-GP41 intergenic region from Autographa californica nuclear polyhedrosis virus (AcMNPV).